A 696-amino-acid polypeptide reads, in one-letter code: Elongation factor G 2 (696 aa).

Residues Ser5–Thr281 form the tr-type G domain. GTP is bound by residues Ala14–Thr21, Asp78–His82, and Asn132–Asp135.

Belongs to the TRAFAC class translation factor GTPase superfamily. Classic translation factor GTPase family. EF-G/EF-2 subfamily.

The protein resides in the cytoplasm. Functionally, catalyzes the GTP-dependent ribosomal translocation step during translation elongation. During this step, the ribosome changes from the pre-translocational (PRE) to the post-translocational (POST) state as the newly formed A-site-bound peptidyl-tRNA and P-site-bound deacylated tRNA move to the P and E sites, respectively. Catalyzes the coordinated movement of the two tRNA molecules, the mRNA and conformational changes in the ribosome. In Vibrio parahaemolyticus serotype O3:K6 (strain RIMD 2210633), this protein is Elongation factor G 2.